Reading from the N-terminus, the 67-residue chain is Large ribosomal subunit protein uL29 (67 aa).

The protein belongs to the universal ribosomal protein uL29 family.

This is Large ribosomal subunit protein uL29 from Rubrobacter xylanophilus (strain DSM 9941 / JCM 11954 / NBRC 16129 / PRD-1).